A 308-amino-acid chain; its full sequence is UDP-N-acetylenolpyruvoylglucosamine reductase (308 aa).

In terms of domain architecture, FAD-binding PCMH-type spans 24–187 (RVGGPADWLF…VSASLQGVPG (164 aa)). Residue Arg167 is part of the active site. Positions 199–230 (QLDKRDQTQPTKERSAGSTFRNPAGFSSTGRA) are disordered. The segment covering 200 to 213 (LDKRDQTQPTKERS) has biased composition (basic and acidic residues). Residues 214 to 228 (AGSTFRNPAGFSSTG) show a composition bias toward polar residues. The Proton donor role is filled by Ser216. The active site involves Glu298.

The protein belongs to the MurB family. Requires FAD as cofactor.

The protein localises to the cytoplasm. The enzyme catalyses UDP-N-acetyl-alpha-D-muramate + NADP(+) = UDP-N-acetyl-3-O-(1-carboxyvinyl)-alpha-D-glucosamine + NADPH + H(+). It functions in the pathway cell wall biogenesis; peptidoglycan biosynthesis. Its function is as follows. Cell wall formation. This chain is UDP-N-acetylenolpyruvoylglucosamine reductase, found in Ruegeria pomeroyi (strain ATCC 700808 / DSM 15171 / DSS-3) (Silicibacter pomeroyi).